The chain runs to 426 residues: Phosphoribosylamine--glycine ligase (426 aa).

In terms of domain architecture, ATP-grasp spans 107–313 (KDFMQKYGVK…FLNVINSALN (207 aa)). Residue 133–194 (LDKISYPVVI…EEFLDGVEIS (62 aa)) coordinates ATP. The Mg(2+) site is built by Glu-283 and Asn-285.

This sequence belongs to the GARS family. Mg(2+) serves as cofactor. Mn(2+) is required as a cofactor.

It catalyses the reaction 5-phospho-beta-D-ribosylamine + glycine + ATP = N(1)-(5-phospho-beta-D-ribosyl)glycinamide + ADP + phosphate + H(+). It participates in purine metabolism; IMP biosynthesis via de novo pathway; N(1)-(5-phospho-D-ribosyl)glycinamide from 5-phospho-alpha-D-ribose 1-diphosphate: step 2/2. In Fusobacterium nucleatum subsp. nucleatum (strain ATCC 25586 / DSM 15643 / BCRC 10681 / CIP 101130 / JCM 8532 / KCTC 2640 / LMG 13131 / VPI 4355), this protein is Phosphoribosylamine--glycine ligase.